The sequence spans 370 residues: Queuine tRNA-ribosyltransferase (370 aa).

Asp89 (proton acceptor) is an active-site residue. Residues 89-93, Asp143, Gln185, and Gly212 each bind substrate; that span reads DSGGF. Residues 243–249 are RNA binding; that stretch reads GVGKPED. Catalysis depends on Asp262, which acts as the Nucleophile. Residues 267 to 271 are RNA binding; important for wobble base 34 recognition; that stretch reads TRNAR. Cys300, Cys302, Cys305, and His331 together coordinate Zn(2+).

This sequence belongs to the queuine tRNA-ribosyltransferase family. Homodimer. Within each dimer, one monomer is responsible for RNA recognition and catalysis, while the other monomer binds to the replacement base PreQ1. Requires Zn(2+) as cofactor.

The catalysed reaction is 7-aminomethyl-7-carbaguanine + guanosine(34) in tRNA = 7-aminomethyl-7-carbaguanosine(34) in tRNA + guanine. Its pathway is tRNA modification; tRNA-queuosine biosynthesis. In terms of biological role, catalyzes the base-exchange of a guanine (G) residue with the queuine precursor 7-aminomethyl-7-deazaguanine (PreQ1) at position 34 (anticodon wobble position) in tRNAs with GU(N) anticodons (tRNA-Asp, -Asn, -His and -Tyr). Catalysis occurs through a double-displacement mechanism. The nucleophile active site attacks the C1' of nucleotide 34 to detach the guanine base from the RNA, forming a covalent enzyme-RNA intermediate. The proton acceptor active site deprotonates the incoming PreQ1, allowing a nucleophilic attack on the C1' of the ribose to form the product. After dissociation, two additional enzymatic reactions on the tRNA convert PreQ1 to queuine (Q), resulting in the hypermodified nucleoside queuosine (7-(((4,5-cis-dihydroxy-2-cyclopenten-1-yl)amino)methyl)-7-deazaguanosine). This chain is Queuine tRNA-ribosyltransferase, found in Hydrogenovibrio crunogenus (strain DSM 25203 / XCL-2) (Thiomicrospira crunogena).